The sequence spans 202 residues: Large ribosomal subunit protein bL25 (202 aa).

This sequence belongs to the bacterial ribosomal protein bL25 family. CTC subfamily. In terms of assembly, part of the 50S ribosomal subunit; part of the 5S rRNA/L5/L18/L25 subcomplex. Contacts the 5S rRNA. Binds to the 5S rRNA independently of L5 and L18.

Its function is as follows. This is one of the proteins that binds to the 5S RNA in the ribosome where it forms part of the central protuberance. The sequence is that of Large ribosomal subunit protein bL25 from Methylococcus capsulatus (strain ATCC 33009 / NCIMB 11132 / Bath).